We begin with the raw amino-acid sequence, 217 residues long: Thiamine-phosphate synthase (217 aa).

Residues 39 to 43 (QLRRK) and N71 each bind 4-amino-2-methyl-5-(diphosphooxymethyl)pyrimidine. Mg(2+) is bound by residues D72 and D91. S110 serves as a coordination point for 4-amino-2-methyl-5-(diphosphooxymethyl)pyrimidine. 137–139 (SPT) contributes to the 2-[(2R,5Z)-2-carboxy-4-methylthiazol-5(2H)-ylidene]ethyl phosphate binding site. K140 contributes to the 4-amino-2-methyl-5-(diphosphooxymethyl)pyrimidine binding site. Residues G173 and 193-194 (IS) contribute to the 2-[(2R,5Z)-2-carboxy-4-methylthiazol-5(2H)-ylidene]ethyl phosphate site.

It belongs to the thiamine-phosphate synthase family. Mg(2+) is required as a cofactor.

It carries out the reaction 2-[(2R,5Z)-2-carboxy-4-methylthiazol-5(2H)-ylidene]ethyl phosphate + 4-amino-2-methyl-5-(diphosphooxymethyl)pyrimidine + 2 H(+) = thiamine phosphate + CO2 + diphosphate. It catalyses the reaction 2-(2-carboxy-4-methylthiazol-5-yl)ethyl phosphate + 4-amino-2-methyl-5-(diphosphooxymethyl)pyrimidine + 2 H(+) = thiamine phosphate + CO2 + diphosphate. The enzyme catalyses 4-methyl-5-(2-phosphooxyethyl)-thiazole + 4-amino-2-methyl-5-(diphosphooxymethyl)pyrimidine + H(+) = thiamine phosphate + diphosphate. Its pathway is cofactor biosynthesis; thiamine diphosphate biosynthesis; thiamine phosphate from 4-amino-2-methyl-5-diphosphomethylpyrimidine and 4-methyl-5-(2-phosphoethyl)-thiazole: step 1/1. Its function is as follows. Condenses 4-methyl-5-(beta-hydroxyethyl)thiazole monophosphate (THZ-P) and 2-methyl-4-amino-5-hydroxymethyl pyrimidine pyrophosphate (HMP-PP) to form thiamine monophosphate (TMP). The sequence is that of Thiamine-phosphate synthase from Bordetella bronchiseptica (strain ATCC BAA-588 / NCTC 13252 / RB50) (Alcaligenes bronchisepticus).